Here is a 118-residue protein sequence, read N- to C-terminus: UPF0295 protein GWCH70_0499 (118 aa).

The next 2 membrane-spanning stretches (helical) occupy residues 12–32 (IRTF…IGIF) and 42–62 (LFMI…FWIG).

This sequence belongs to the UPF0295 family.

Its subcellular location is the cell membrane. The protein is UPF0295 protein GWCH70_0499 of Geobacillus sp. (strain WCH70).